The sequence spans 159 residues: Cyclic pyranopterin monophosphate synthase (159 aa).

Substrate contacts are provided by residues 75 to 77 (LCH) and 113 to 114 (ME). D128 is a catalytic residue.

This sequence belongs to the MoaC family. Homohexamer; trimer of dimers.

The enzyme catalyses (8S)-3',8-cyclo-7,8-dihydroguanosine 5'-triphosphate = cyclic pyranopterin phosphate + diphosphate. The protein operates within cofactor biosynthesis; molybdopterin biosynthesis. Its function is as follows. Catalyzes the conversion of (8S)-3',8-cyclo-7,8-dihydroguanosine 5'-triphosphate to cyclic pyranopterin monophosphate (cPMP). The sequence is that of Cyclic pyranopterin monophosphate synthase from Serratia proteamaculans (strain 568).